A 1180-amino-acid polypeptide reads, in one-letter code: DNA-directed RNA polymerase subunit beta (1180 aa).

Acidic residues predominate over residues 1154-1164 (EMKELDDEDEQ). The segment at 1154–1180 (EMKELDDEDEQASDKLNLNIDSTESNV) is disordered. Polar residues predominate over residues 1167-1180 (DKLNLNIDSTESNV).

Belongs to the RNA polymerase beta chain family. The RNAP catalytic core consists of 2 alpha, 1 beta, 1 beta' and 1 omega subunit. When a sigma factor is associated with the core the holoenzyme is formed, which can initiate transcription.

It catalyses the reaction RNA(n) + a ribonucleoside 5'-triphosphate = RNA(n+1) + diphosphate. Functionally, DNA-dependent RNA polymerase catalyzes the transcription of DNA into RNA using the four ribonucleoside triphosphates as substrates. The polypeptide is DNA-directed RNA polymerase subunit beta (Halalkalibacterium halodurans (strain ATCC BAA-125 / DSM 18197 / FERM 7344 / JCM 9153 / C-125) (Bacillus halodurans)).